We begin with the raw amino-acid sequence, 847 residues long: MAAAAPAAAASPEAPAVSGSADPETGDEDSREVRVLQSLRGRIYEAKNLLPYLGPNKMRDCFCTINLDQEEVYRTQVVEKSLSPYFSEEFYFEIPRTFQYLSFYVYDKNVLQRDLRIGKVAIKKEDLCSHSGKETWFSLQPIDSNSEVQGKVHLELRLNELITENGTVCQQLVVHIKACHGLPLINGQSCDPYATVSLVGPSRNDQKKTKVKKKTSNPQFNEVFYFEVTRSSSYSRKSQFQVEEEDIEKLEIRIDLWNNENLVQDVFLGEIKVPVNVLRSDSFHQAWYLLQPRDNGNKSSKTDDLGSLLLTLCYTEDCVLPSEYYGPLKTLLLKSPDVQPVSASAAYILGEICQDQKDAVLPLVRLLLHHNKLVPFITAVAELDLKDTPDANAIFRGNSLATQCLTEMMKIVGGHYLKVTLKPVLDEICESSKSCEIDPVKLKEGDNVENNKENLYYYVDKVFNTIVGSSVSCPTVMCDIFYSLRQMAAKKFPNHPHVQYSAVSSFVFLRFFAVAILSPHAFHLRPHYPDTQTVRTLTLISKTIQIIGNWGCQSRKKSRFKKSVMCEFLKMFQEERYFTDVKKFLDEISSTETKESSGTSEPVHLKEGEMYKRAQGRTRIGKKNFKKRWFCLTSRELTYHRQQGKDAIYTIPVKNILAVEKLEEGSFNKKNMFQVIHTEKTLYIQANNCVEANEWIDVLCRVSRCNHNRLSSFHPSAYLNGNWLCCQETSESTPGCKPCTAGIPADIQIDIDEDRETERIYSIFTLSLLKLQKMEETCGSIAVYQGPQKEPGYSKFTIEDSVATFKTIQQIKSTIEKLDEPHEKYRKKRSSSAKYGSKENPIVGKIS.

The segment covering 1-21 (MAAAAPAAAASPEAPAVSGSA) has biased composition (low complexity). Residues 1 to 31 (MAAAAPAAAASPEAPAVSGSADPETGDEDSR) are disordered. The residue at position 2 (Ala-2) is an N-acetylalanine. 2 consecutive C2 domains span residues 19–137 (GSAD…ETWF) and 148–288 (VQGK…QAWY). The region spanning 371–588 (NKLVPFITAV…TDVKKFLDEI (218 aa)) is the Ras-GAP domain. The residue at position 554 (Ser-554) is a Phosphoserine. One can recognise a PH domain in the interval 603–704 (VHLKEGEMYK…WIDVLCRVSR (102 aa)). The Btk-type zinc finger occupies 706-742 (NHNRLSSFHPSAYLNGNWLCCQETSESTPGCKPCTAG). 4 residues coordinate Zn(2+): His-714, Cys-725, Cys-726, and Cys-736. The tract at residues 819–847 (DEPHEKYRKKRSSSAKYGSKENPIVGKIS) is disordered.

The protein resides in the cell membrane. Inhibitory regulator of the Ras-cyclic AMP pathway. Binds inositol tetrakisphosphate (IP4) and phospholipids. This is Ras GTPase-activating protein 2 (Rasa2) from Mus musculus (Mouse).